Consider the following 557-residue polypeptide: Urocanate hydratase (557 aa).

The disordered stretch occupies residues 1-20 (MSNPRHNEREVRSPRGDELN). Residues 52 to 53 (GG), Gln-130, 176 to 178 (GMG), Glu-196, Arg-201, 242 to 243 (NA), 263 to 267 (QTSAH), 273 to 274 (YL), and Tyr-322 each bind NAD(+). The active site involves Cys-410. Gly-492 serves as a coordination point for NAD(+).

It belongs to the urocanase family. Requires NAD(+) as cofactor.

The protein resides in the cytoplasm. The enzyme catalyses 4-imidazolone-5-propanoate = trans-urocanate + H2O. It functions in the pathway amino-acid degradation; L-histidine degradation into L-glutamate; N-formimidoyl-L-glutamate from L-histidine: step 2/3. Its function is as follows. Catalyzes the conversion of urocanate to 4-imidazolone-5-propionate. The chain is Urocanate hydratase from Brucella abortus (strain S19).